The sequence spans 88 residues: Putative membrane protein insertion efficiency factor (88 aa).

The interval 67 to 88 (LNAGGYDPVPPKSDNHSKENKK) is disordered. Basic and acidic residues predominate over residues 79–88 (SDNHSKENKK).

The protein belongs to the UPF0161 family.

The protein localises to the cell inner membrane. Its function is as follows. Could be involved in insertion of integral membrane proteins into the membrane. The sequence is that of Putative membrane protein insertion efficiency factor from Actinobacillus succinogenes (strain ATCC 55618 / DSM 22257 / CCUG 43843 / 130Z).